A 398-amino-acid polypeptide reads, in one-letter code: Riboflavin transporter RfnT (398 aa).

A run of 12 helical transmembrane segments spans residues 13–35 (ILTI…GGLV), 45–67 (LVTL…AAFF), 74–91 (RNAY…GVIA), 95–117 (IFAA…ASYV), 137–156 (ISWV…QLVI), 166–188 (MFAG…LFML), 220–242 (VAAG…IAMV), 252–274 (ALGI…KLIT), 281–300 (ITAL…LGGF), 305–324 (FWGA…IGAT), 345–367 (FIMF…SSGW), and 372–389 (WLVF…ILRL).

It belongs to the major facilitator superfamily.

Its subcellular location is the cell membrane. Functionally, transports riboflavin into the cell. The chain is Riboflavin transporter RfnT from Brucella anthropi (strain ATCC 49188 / DSM 6882 / CCUG 24695 / JCM 21032 / LMG 3331 / NBRC 15819 / NCTC 12168 / Alc 37) (Ochrobactrum anthropi).